The chain runs to 287 residues: Inorganic pyrophosphatase (287 aa).

Position 79 (Arg79) interacts with diphosphate. Residues Asp116, Asp121, and Asp153 each coordinate Mg(2+).

Belongs to the PPase family. The cofactor is Mg(2+).

It is found in the cytoplasm. The catalysed reaction is diphosphate + H2O = 2 phosphate + H(+). The chain is Inorganic pyrophosphatase (IPP1) from Debaryomyces hansenii (strain ATCC 36239 / CBS 767 / BCRC 21394 / JCM 1990 / NBRC 0083 / IGC 2968) (Yeast).